The chain runs to 392 residues: Aspartate aminotransferase (392 aa).

Positions 40, 126, and 176 each coordinate L-aspartate. K239 is subject to N6-(pyridoxal phosphate)lysine.

The protein belongs to the class-I pyridoxal-phosphate-dependent aminotransferase family. In terms of assembly, homodimer. Pyridoxal 5'-phosphate serves as cofactor.

Its subcellular location is the cytoplasm. It catalyses the reaction L-aspartate + 2-oxoglutarate = oxaloacetate + L-glutamate. In Bacillus sp. (strain YM-2), this protein is Aspartate aminotransferase.